A 448-amino-acid polypeptide reads, in one-letter code: Tryptophan dimethylallyltransferase 1 (448 aa).

L-tryptophan contacts are provided by residues 80-81 (IL) and E89. Residues R100, K186, and Y188 each coordinate substrate. L-tryptophan is bound by residues Y190 and R249. Residues R262, K264, Y266, Q348, Y350, Y414, and Y418 each contribute to the substrate site.

It belongs to the tryptophan dimethylallyltransferase family. As to quaternary structure, homodimer.

It catalyses the reaction L-tryptophan + dimethylallyl diphosphate = 4-(3-methylbut-2-enyl)-L-tryptophan + diphosphate. The protein operates within alkaloid biosynthesis; ergot alkaloid biosynthesis. Functionally, tryptophan dimethylallyltransferase; part of the gene cluster that mediates the biosynthesis of fungal ergot alkaloid. DmaW catalyzes the first step of ergot alkaloid biosynthesis by condensing dimethylallyl diphosphate (DMAP) and tryptophan to form 4-dimethylallyl-L-tryptophan. The second step is catalyzed by the methyltransferase easF that methylates 4-dimethylallyl-L-tryptophan in the presence of S-adenosyl-L-methionine, resulting in the formation of 4-dimethylallyl-L-abrine. The catalase easC and the FAD-dependent oxidoreductase easE then transform 4-dimethylallyl-L-abrine to chanoclavine-I which is further oxidized by easD in the presence of NAD(+), resulting in the formation of chanoclavine-I aldehyde. Agroclavine dehydrogenase easG then mediates the conversion of chanoclavine-I aldehyde to agroclavine via a non-enzymatic adduct reaction: the substrate is an iminium intermediate that is formed spontaneously from chanoclavine-I aldehyde in the presence of glutathione. The presence of easA is not required to complete this reaction. Further conversion of agroclavine to paspalic acid is a two-step process involving oxidation of agroclavine to elymoclavine and of elymoclavine to paspalic acid, the second step being performed by the elymoclavine oxidase cloA. Paspalic acid is then further converted to D-lysergic acid. Ergopeptines are assembled from D-lysergic acid and three different amino acids by the D-lysergyl-peptide-synthetases composed each of a monomudular and a trimodular nonribosomal peptide synthetase subunit. LpsB and lpsC encode the monomodular subunits responsible for D-lysergic acid activation and incorporation into the ergopeptine backbone. LpsA1 and A2 subunits encode the trimodular nonribosomal peptide synthetase assembling the tripeptide portion of ergopeptines. LpsA1 is responsible for formation of the major ergopeptine, ergotamine, and lpsA2 for alpha-ergocryptine, the minor ergopeptine of the total alkaloid mixture elaborated by C.purpurea. D-lysergyl-tripeptides are assembled by the nonribosomal peptide synthetases and released as N-(D-lysergyl-aminoacyl)-lactams. Cyclolization of the D-lysergyl-tripeptides is performed by the Fe(2+)/2-ketoglutarate-dependent dioxygenase easH which introduces a hydroxyl group into N-(D-lysergyl-aminoacyl)-lactam at alpha-C of the aminoacyl residue followed by spontaneous condensation with the terminal lactam carbonyl group. The polypeptide is Tryptophan dimethylallyltransferase 1 (Claviceps purpurea (strain 20.1) (Ergot fungus)).